The chain runs to 1066 residues: Zinc finger and BTB domain-containing protein 21 (1066 aa).

In terms of domain architecture, BTB spans 30–96; sequence CDVLLIVGDQ…IYSSSLFVEK (67 aa). Residues 30 to 96 form a mediates homodimerization region; that stretch reads CDVLLIVGDQ…IYSSSLFVEK (67 aa). A Glycyl lysine isopeptide (Lys-Gly) (interchain with G-Cter in SUMO1); alternate cross-link involves residue K40. K40 participates in a covalent cross-link: Glycyl lysine isopeptide (Lys-Gly) (interchain with G-Cter in SUMO2); alternate. A compositionally biased stretch (polar residues) spans 154–177; that stretch reads SRNEAQGKTVSQNQPDVSHTSRPS. The disordered stretch occupies residues 154 to 196; the sequence is SRNEAQGKTVSQNQPDVSHTSRPSPSIAVKANTNKPHVPKPIE. Glycyl lysine isopeptide (Lys-Gly) (interchain with G-Cter in SUMO2) cross-links involve residues K255, K266, K273, K312, and K337. Phosphoserine is present on residues S345 and S381. K383 participates in a covalent cross-link: Glycyl lysine isopeptide (Lys-Gly) (interchain with G-Cter in SUMO2). Residues 388-399 are compositionally biased toward basic and acidic residues; sequence DCSEKTALDDRP. Disordered stretches follow at residues 388 to 442, 454 to 485, and 498 to 525; these read DCSE…DPSD, TAAA…AKRR, and KVNE…ADFP. Phosphoserine is present on residues S411 and S422. K430 is covalently cross-linked (Glycyl lysine isopeptide (Lys-Gly) (interchain with G-Cter in SUMO2)). T431 bears the Phosphothreonine mark. S434, S435, and S438 each carry phosphoserine. A compositionally biased stretch (basic and acidic residues) spans 466–478; that stretch reads LSLKTEDDQKDMS. Residues K469 and K475 each participate in a glycyl lysine isopeptide (Lys-Gly) (interchain with G-Cter in SUMO2) cross-link. 2 consecutive C2H2-type zinc fingers follow at residues 546–569 and 575–598; these read FKCK…NMYH and YACD…QTQH. S605 bears the Phosphoserine mark. Glycyl lysine isopeptide (Lys-Gly) (interchain with G-Cter in SUMO2) cross-links involve residues K617, K643, and K659. The C2H2-type 3 zinc finger occupies 670–692; it reads YICTYCGKAYRFLSQFKQHIKMH. A Glycyl lysine isopeptide (Lys-Gly) (interchain with G-Cter in SUMO2) cross-link involves residue K702. Position 714 is a phosphoserine (S714). The C2H2-type 4; atypical zinc finger occupies 748–770; the sequence is AVCPYCSLRFFSPELKQEHESKC. Glycyl lysine isopeptide (Lys-Gly) (interchain with G-Cter in SUMO2) cross-links involve residues K763 and K785. The C2H2-type 5 zinc-finger motif lies at 775–798; it reads LTCLECMRTFKSSFSIWRHQVEVH. A disordered region spans residues 806-840; that stretch reads TENFSLPVLDHNGDVTGSSRPQSQPEPNKVNHIVT. The span at 820-831 shows a compositional bias: polar residues; sequence VTGSSRPQSQPE. Residue K875 forms a Glycyl lysine isopeptide (Lys-Gly) (interchain with G-Cter in SUMO2) linkage. Residue K879 forms a Glycyl lysine isopeptide (Lys-Gly) (interchain with G-Cter in SUMO1); alternate linkage. Residue K879 forms a Glycyl lysine isopeptide (Lys-Gly) (interchain with G-Cter in SUMO2); alternate linkage. Positions 879–906 are disordered; sequence KEEPVEEAEEEAPEASTAPKEAGPSKEA. The span at 882 to 891 shows a compositional bias: acidic residues; it reads PVEEAEEEAP. The C2H2-type 6; atypical zinc-finger motif lies at 909 to 932; it reads WPCEKCGKMFTVHKQLERHQELLC. A Glycyl lysine isopeptide (Lys-Gly) (interchain with G-Cter in SUMO2) cross-link involves residue K935. A C2H2-type 7 zinc finger spans residues 937-959; that stretch reads FICHVCNKAFRTNFRLWSHFQSH. The disordered stretch occupies residues 963–1014; the sequence is ASEESAHKESEVCPVPTNSPSPPPLPPPPPLPKIQPLEPDSPTGLSENPTPA. The span at 979-995 shows a compositional bias: pro residues; sequence TNSPSPPPLPPPPPLPK. At S1003 the chain carries Phosphoserine. The C2H2-type 8 zinc finger occupies 1043 to 1065; sequence FMCKLCHRTFKTAFSLWSHEQTH.

In terms of assembly, homodimer. Interacts with ZBTB14. Ubiquitous in fetal and adult tissues.

It localises to the nucleus. Acts as a transcription repressor. This chain is Zinc finger and BTB domain-containing protein 21 (ZBTB21), found in Homo sapiens (Human).